Here is a 174-residue protein sequence, read N- to C-terminus: ATP-dependent protease subunit HslV (174 aa).

The active site involves Thr-2. Gly-157, Cys-160, and Thr-163 together coordinate Na(+).

Belongs to the peptidase T1B family. HslV subfamily. In terms of assembly, a double ring-shaped homohexamer of HslV is capped on each side by a ring-shaped HslU homohexamer. The assembly of the HslU/HslV complex is dependent on binding of ATP.

It localises to the cytoplasm. The enzyme catalyses ATP-dependent cleavage of peptide bonds with broad specificity.. With respect to regulation, allosterically activated by HslU binding. Protease subunit of a proteasome-like degradation complex believed to be a general protein degrading machinery. In Shewanella putrefaciens (strain CN-32 / ATCC BAA-453), this protein is ATP-dependent protease subunit HslV.